A 111-amino-acid chain; its full sequence is T cell receptor beta variable 29-1 (111 aa).

Positions 1–16 (MLSLLLLLLGLGSVFS) are cleaved as a signal peptide. The region spanning 17-111 (AVISQKPSRD…DSSIYLCSVE (95 aa)) is the Ig-like domain. A disulfide bridge connects residues Cys38 and Cys108. The N-linked (GlcNAc...) asparagine glycan is linked to Asn87.

Alpha-beta TR is a heterodimer composed of an alpha and beta chain; disulfide-linked. The alpha-beta TR is associated with the transmembrane signaling CD3 coreceptor proteins to form the TR-CD3 (TcR or TCR). The assembly of alpha-beta TR heterodimers with CD3 occurs in the endoplasmic reticulum where a single alpha-beta TR heterodimer associates with one CD3D-CD3E heterodimer, one CD3G-CD3E heterodimer and one CD247 homodimer forming a stable octameric structure. CD3D-CD3E and CD3G-CD3E heterodimers preferentially associate with TR alpha and TR beta chains, respectively. The association of the CD247 homodimer is the last step of TcR assembly in the endoplasmic reticulum and is required for transport to the cell surface.

It is found in the cell membrane. V region of the variable domain of T cell receptor (TR) beta chain that participates in the antigen recognition. Alpha-beta T cell receptors are antigen specific receptors which are essential to the immune response and are present on the cell surface of T lymphocytes. Recognize peptide-major histocompatibility (MH) (pMH) complexes that are displayed by antigen presenting cells (APC), a prerequisite for efficient T cell adaptive immunity against pathogens. Binding of alpha-beta TR to pMH complex initiates TR-CD3 clustering on the cell surface and intracellular activation of LCK that phosphorylates the ITAM motifs of CD3G, CD3D, CD3E and CD247 enabling the recruitment of ZAP70. In turn ZAP70 phosphorylates LAT, which recruits numerous signaling molecules to form the LAT signalosome. The LAT signalosome propagates signal branching to three major signaling pathways, the calcium, the mitogen-activated protein kinase (MAPK) kinase and the nuclear factor NF-kappa-B (NF-kB) pathways, leading to the mobilization of transcription factors that are critical for gene expression and essential for T cell growth and differentiation. The T cell repertoire is generated in the thymus, by V-(D)-J rearrangement. This repertoire is then shaped by intrathymic selection events to generate a peripheral T cell pool of self-MH restricted, non-autoaggressive T cells. Post-thymic interaction of alpha-beta TR with the pMH complexes shapes TR structural and functional avidity. This Homo sapiens (Human) protein is T cell receptor beta variable 29-1.